A 181-amino-acid chain; its full sequence is Acireductone dioxygenase (181 aa).

Fe(2+) contacts are provided by H97, H99, E103, and H141. Ni(2+) contacts are provided by H97, H99, E103, and H141.

Belongs to the acireductone dioxygenase (ARD) family. In terms of assembly, monomer. Requires Fe(2+) as cofactor. The cofactor is Ni(2+).

The catalysed reaction is 1,2-dihydroxy-5-(methylsulfanyl)pent-1-en-3-one + O2 = 3-(methylsulfanyl)propanoate + CO + formate + 2 H(+). It catalyses the reaction 1,2-dihydroxy-5-(methylsulfanyl)pent-1-en-3-one + O2 = 4-methylsulfanyl-2-oxobutanoate + formate + 2 H(+). Its pathway is amino-acid biosynthesis; L-methionine biosynthesis via salvage pathway; L-methionine from S-methyl-5-thio-alpha-D-ribose 1-phosphate: step 5/6. Functionally, catalyzes 2 different reactions between oxygen and the acireductone 1,2-dihydroxy-3-keto-5-methylthiopentene (DHK-MTPene) depending upon the metal bound in the active site. Fe-containing acireductone dioxygenase (Fe-ARD) produces formate and 2-keto-4-methylthiobutyrate (KMTB), the alpha-ketoacid precursor of methionine in the methionine recycle pathway. Ni-containing acireductone dioxygenase (Ni-ARD) produces methylthiopropionate, carbon monoxide and formate, and does not lie on the methionine recycle pathway. The protein is Acireductone dioxygenase of Pseudomonas syringae pv. tomato (strain ATCC BAA-871 / DC3000).